Reading from the N-terminus, the 210-residue chain is Uracil phosphoribosyltransferase (210 aa).

Residues Arg78, Arg103, and 130 to 138 (DPMLATGGT) contribute to the 5-phospho-alpha-D-ribose 1-diphosphate site. Residues Ile193 and 198–200 (GDA) each bind uracil. Asp199 contacts 5-phospho-alpha-D-ribose 1-diphosphate.

Belongs to the UPRTase family. The cofactor is Mg(2+).

It carries out the reaction UMP + diphosphate = 5-phospho-alpha-D-ribose 1-diphosphate + uracil. Its pathway is pyrimidine metabolism; UMP biosynthesis via salvage pathway; UMP from uracil: step 1/1. Allosterically activated by GTP. Its function is as follows. Catalyzes the conversion of uracil and 5-phospho-alpha-D-ribose 1-diphosphate (PRPP) to UMP and diphosphate. The polypeptide is Uracil phosphoribosyltransferase (Xanthomonas euvesicatoria pv. vesicatoria (strain 85-10) (Xanthomonas campestris pv. vesicatoria)).